The chain runs to 267 residues: Phosphatidylglycerol--prolipoprotein diacylglyceryl transferase (267 aa).

The next 3 membrane-spanning stretches (helical) occupy residues L18–A38, F57–Y77, and G95–W115. R140 lines the a 1,2-diacyl-sn-glycero-3-phospho-(1'-sn-glycerol) pocket. The next 3 helical transmembrane spans lie at S173–I193, G200–F220, and F233–I253.

It belongs to the Lgt family.

The protein localises to the cell inner membrane. The catalysed reaction is L-cysteinyl-[prolipoprotein] + a 1,2-diacyl-sn-glycero-3-phospho-(1'-sn-glycerol) = an S-1,2-diacyl-sn-glyceryl-L-cysteinyl-[prolipoprotein] + sn-glycerol 1-phosphate + H(+). It participates in protein modification; lipoprotein biosynthesis (diacylglyceryl transfer). Functionally, catalyzes the transfer of the diacylglyceryl group from phosphatidylglycerol to the sulfhydryl group of the N-terminal cysteine of a prolipoprotein, the first step in the formation of mature lipoproteins. In Pseudoalteromonas translucida (strain TAC 125), this protein is Phosphatidylglycerol--prolipoprotein diacylglyceryl transferase.